An 850-amino-acid chain; its full sequence is Pentatricopeptide repeat-containing protein At5g16860 (850 aa).

PPR repeat units lie at residues 58 to 88 (TLNL…FPPS), 91 to 125 (GVYH…SWTP), 126 to 160 (DNYT…GFIS), 161 to 191 (NVFV…MSVW), 192 to 227 (DVVS…GCRP), 228 to 262 (DNIT…EMIQ), 263 to 293 (NMFV…MSVK), 294 to 328 (DVVS…KIKM), 329 to 363 (DVVT…GIKP), 364 to 398 (NEVT…PIDL), 406 to 436 (ENMV…LSPK), 439 to 473 (DVVT…DCQT), 476 to 510 (NAFT…QQNA), 512 to 542 (PLFV…MMAK), 543 to 577 (NEVT…GFKL), 578 to 608 (DGVT…MKTV), and 614 to 644 (GPEH…MPME). A type E motif region spans residues 649–724 (VWVAFLSCCR…RPGCSWVEGI (76 aa)). A type E(+) motif region spans residues 725-755 (KGTTTFFVGDKTHPHAKEIYQVLLDHMQRIK). Residues 756 to 850 (DIGYVPETGF…NGSCSCKGYW (95 aa)) form a type DYW motif region.

Belongs to the PPR family. PCMP-H subfamily.

This Arabidopsis thaliana (Mouse-ear cress) protein is Pentatricopeptide repeat-containing protein At5g16860 (PCMP-H92).